A 204-amino-acid polypeptide reads, in one-letter code: Leucyl/phenylalanyl-tRNA--protein transferase (204 aa).

The protein belongs to the L/F-transferase family.

It localises to the cytoplasm. It carries out the reaction N-terminal L-lysyl-[protein] + L-leucyl-tRNA(Leu) = N-terminal L-leucyl-L-lysyl-[protein] + tRNA(Leu) + H(+). The catalysed reaction is N-terminal L-arginyl-[protein] + L-leucyl-tRNA(Leu) = N-terminal L-leucyl-L-arginyl-[protein] + tRNA(Leu) + H(+). It catalyses the reaction L-phenylalanyl-tRNA(Phe) + an N-terminal L-alpha-aminoacyl-[protein] = an N-terminal L-phenylalanyl-L-alpha-aminoacyl-[protein] + tRNA(Phe). In terms of biological role, functions in the N-end rule pathway of protein degradation where it conjugates Leu, Phe and, less efficiently, Met from aminoacyl-tRNAs to the N-termini of proteins containing an N-terminal arginine or lysine. The chain is Leucyl/phenylalanyl-tRNA--protein transferase from Agrobacterium fabrum (strain C58 / ATCC 33970) (Agrobacterium tumefaciens (strain C58)).